The chain runs to 344 residues: uncharacterized protein (344 aa).

This sequence belongs to the MG414/MG415 family.

This is an uncharacterized protein from Mycoplasma pneumoniae (strain ATCC 29342 / M129 / Subtype 1) (Mycoplasmoides pneumoniae).